The chain runs to 548 residues: ADP,ATP carrier protein 1 (548 aa).

Helical transmembrane passes span 39 to 59 (RPVF…YSVS) and 75 to 95 (SIPY…VFSI). An N-linked (GlcNAc...) asparagine glycan is attached at asparagine 101. The next 8 helical transmembrane spans lie at 107 to 127 (VFSI…TVLM), 149 to 169 (MVFM…SWTS), 171 to 191 (LMYL…FFAL), 204 to 224 (FIPL…FSMK), 239 to 259 (LFFR…IYLI), 302 to 322 (LVLA…MVEA), 350 to 370 (IQLA…PALI), and 374 to 394 (GFLY…ASVF). Residues asparagine 400 and asparagine 406 are each glycosylated (N-linked (GlcNAc...) asparagine). The chain crosses the membrane as a helical span at residues 410 to 430 (LGFVSIGENLWLEQLLGAIIV). N-linked (GlcNAc...) asparagine glycosylation occurs at asparagine 488. Residues 494-514 (KAAISSLTIVTVITACWGFAV) form a helical membrane-spanning segment.

Belongs to the ADP/ATP translocase tlc family.

It is found in the cell membrane. ATP transporter involved in the uptake of ATP from the host cell cytoplasm. Provides the microsporidian cell with host ATP in exchange for ADP. This is an obligate exchange system. This energy acquiring activity is an important component of microsporidian parasitism. The protein is ADP,ATP carrier protein 1 (ANC1) of Paranosema grylli (Microsporidian parasite).